A 423-amino-acid chain; its full sequence is Gamma-glutamyl phosphate reductase (423 aa).

The protein belongs to the gamma-glutamyl phosphate reductase family.

Its subcellular location is the cytoplasm. It carries out the reaction L-glutamate 5-semialdehyde + phosphate + NADP(+) = L-glutamyl 5-phosphate + NADPH + H(+). The protein operates within amino-acid biosynthesis; L-proline biosynthesis; L-glutamate 5-semialdehyde from L-glutamate: step 2/2. Functionally, catalyzes the NADPH-dependent reduction of L-glutamate 5-phosphate into L-glutamate 5-semialdehyde and phosphate. The product spontaneously undergoes cyclization to form 1-pyrroline-5-carboxylate. The sequence is that of Gamma-glutamyl phosphate reductase from Burkholderia lata (strain ATCC 17760 / DSM 23089 / LMG 22485 / NCIMB 9086 / R18194 / 383).